The chain runs to 450 residues: Isoleucine 2-epimerase (450 aa).

Pyridoxal 5'-phosphate-binding positions include glycine 115–serine 116, tyrosine 142, and aspartate 250–asparagine 253. N6-(pyridoxal phosphate)lysine is present on lysine 280. Threonine 309 contacts pyridoxal 5'-phosphate.

The protein belongs to the class-III pyridoxal-phosphate-dependent aminotransferase family. As to quaternary structure, homotetramer. Requires pyridoxal 5'-phosphate as cofactor.

The catalysed reaction is L-isoleucine = D-allo-isoleucine. Catalyzes the epimerization of L-isoleucine to D-allo-isoleucine and D-allo-isoleucine to L-isoleucine. Can also catalyze the racemization of many nonpolar amino acids, including leucine and valine. Does not have GABA aminotransferase activity. In Lentilactobacillus buchneri (Lactobacillus buchneri), this protein is Isoleucine 2-epimerase.